Here is a 626-residue protein sequence, read N- to C-terminus: Methanol dehydrogenase [cytochrome c] subunit 1 (626 aa).

The signal sequence occupies residues 1 to 27; the sequence is MSRFVTSVSALAMLALAPAALSSGAYA. The cysteines at positions 130 and 131 are disulfide-linked. Glutamate 204 and asparagine 288 together coordinate Ca(2+). Aspartate 330 functions as the Proton acceptor in the catalytic mechanism. Cysteine 413 and cysteine 442 form a disulfide bridge.

It belongs to the bacterial PQQ dehydrogenase family. As to quaternary structure, heterotetramer composed of 2 alpha and 2 beta subunits. Requires pyrroloquinoline quinone as cofactor. Ca(2+) is required as a cofactor.

The protein resides in the cell inner membrane. The catalysed reaction is 2 Fe(III)-[cytochrome cL] + a primary alcohol = 2 Fe(II)-[cytochrome cL] + an aldehyde + 2 H(+). Catalyzes the oxidation of primary alcohols including methanol. The chain is Methanol dehydrogenase [cytochrome c] subunit 1 (moxF) from Methylorubrum extorquens (strain ATCC 14718 / DSM 1338 / JCM 2805 / NCIMB 9133 / AM1) (Methylobacterium extorquens).